Here is a 70-residue protein sequence, read N- to C-terminus: ATP synthase subunit epsilon, mitochondrial (70 aa).

This sequence belongs to the eukaryotic ATPase epsilon family. As to quaternary structure, F-type ATPases have 2 components, CF(1) - the catalytic core - and CF(0) - the membrane proton channel. CF(1) has five subunits: alpha(3), beta(3), gamma(1), delta(1), epsilon(1). CF(0) has three main subunits: a, b and c.

It localises to the mitochondrion. The protein resides in the mitochondrion inner membrane. In terms of biological role, mitochondrial membrane ATP synthase (F(1)F(0) ATP synthase or Complex V) produces ATP from ADP in the presence of a proton gradient across the membrane which is generated by electron transport complexes of the respiratory chain. F-type ATPases consist of two structural domains, F(1) - containing the extramembraneous catalytic core, and F(0) - containing the membrane proton channel, linked together by a central stalk and a peripheral stalk. During catalysis, ATP synthesis in the catalytic domain of F(1) is coupled via a rotary mechanism of the central stalk subunits to proton translocation. Part of the complex F(1) domain and of the central stalk which is part of the complex rotary element. Rotation of the central stalk against the surrounding alpha(3)beta(3) subunits leads to hydrolysis of ATP in three separate catalytic sites on the beta subunits. The chain is ATP synthase subunit epsilon, mitochondrial from Ipomoea batatas (Sweet potato).